Reading from the N-terminus, the 304-residue chain is Peroxisomal membrane protein 13 (304 aa).

Disordered regions lie at residues 1-78 (MASQ…WEQQ) and 258-304 (PRKM…VWGN). 2 stretches are compositionally biased toward polar residues: residues 19-44 (NTSG…SGTA) and 56-67 (RPNTAANMNSLS). Low complexity predominate over residues 262–279 (QQPPQGPNGLPLPHQPHG).

Belongs to the peroxin-13 family. In terms of assembly, interacts with PEX14; forming the PEX13-PEX14 docking complex. Interacts (via N-terminus) with PEX7, but not with PEX5. Interacts with APEM9 (via N-terminus). As to expression, highly expressed in pollen. Detected in shoots, roots, stems, leaves, inflorescences and emasculated postils. Strongly expressed in both male and female gametophytes during fertilization.

The protein localises to the peroxisome membrane. In terms of biological role, component of the PEX13-PEX14 docking complex, a translocon channel that specifically mediates the import of peroxisomal cargo proteins bound to PEX5 receptor. The PEX13-PEX14 docking complex forms a large import pore which can be opened to a diameter of about 9 nm. Mechanistically, PEX5 receptor along with cargo proteins associates with the PEX14 subunit of the PEX13-PEX14 docking complex in the cytosol, leading to the insertion of the receptor into the organelle membrane with the concomitant translocation of the cargo into the peroxisome matrix. Essential for pollen-tube discharge that take place only in the presence of functional peroxisomes in either the male or the female gametophyte. This Arabidopsis thaliana (Mouse-ear cress) protein is Peroxisomal membrane protein 13.